The following is a 210-amino-acid chain: Cell division protein SepF (210 aa).

The interval 13–78 (GFGEPTGYDY…VTSTAMNPPM (66 aa)) is disordered. Over residues 22 to 31 (YDYDEMEGDD) the composition is skewed to acidic residues. The span at 47 to 60 (RSEEPHPRPSEPEM) shows a compositional bias: basic and acidic residues. Positions 64–78 (VNTSAVTSTAMNPPM) are enriched in polar residues.

Belongs to the SepF family. Homodimer. Interacts with FtsZ.

The protein localises to the cytoplasm. Its function is as follows. Cell division protein that is part of the divisome complex and is recruited early to the Z-ring. Probably stimulates Z-ring formation, perhaps through the cross-linking of FtsZ protofilaments. Its function overlaps with FtsA. This Cyanothece sp. (strain PCC 7425 / ATCC 29141) protein is Cell division protein SepF.